We begin with the raw amino-acid sequence, 453 residues long: Tubulin alpha-13 chain (453 aa).

Gln-11 lines the GTP pocket. Position 40 is an N6-acetyllysine (Lys-40). The GTP site is built by Glu-71, Ser-140, Gly-144, Thr-145, Thr-179, Asn-206, and Asn-228. Mg(2+) is bound at residue Glu-71. The active site involves Glu-254. Residues 429 to 453 (EKDYEEVGTESQEGDGEEGEDGGDQ) are disordered. A compositionally biased stretch (acidic residues) spans 431–453 (DYEEVGTESQEGDGEEGEDGGDQ).

It belongs to the tubulin family. In terms of assembly, dimer of alpha and beta chains. A typical microtubule is a hollow water-filled tube with an outer diameter of 25 nm and an inner diameter of 15 nM. Alpha-beta heterodimers associate head-to-tail to form protofilaments running lengthwise along the microtubule wall with the beta-tubulin subunit facing the microtubule plus end conferring a structural polarity. Microtubules usually have 13 protofilaments but different protofilament numbers can be found in some organisms and specialized cells. It depends on Mg(2+) as a cofactor. In terms of processing, acetylation of alpha chains at Lys-40 stabilizes microtubules and affects affinity and processivity of microtubule motors. This modification has a role in multiple cellular functions, ranging from cell motility, cell cycle progression or cell differentiation to intracellular trafficking and signaling.

It is found in the cytoplasm. It localises to the cytoskeleton. The catalysed reaction is GTP + H2O = GDP + phosphate + H(+). Functionally, tubulin is the major constituent of microtubules, a cylinder consisting of laterally associated linear protofilaments composed of alpha- and beta-tubulin heterodimers. Microtubules grow by the addition of GTP-tubulin dimers to the microtubule end, where a stabilizing cap forms. Below the cap, tubulin dimers are in GDP-bound state, owing to GTPase activity of alpha-tubulin. The protein is Tubulin alpha-13 chain (TUBA13) of Naegleria pringsheimi (Amoeba).